The chain runs to 340 residues: Methane monooxygenase component C (340 aa).

A 2Fe-2S ferredoxin-type domain is found at 1–92; it reads MYQIVIETED…DLHLLVPYTY (92 aa). 4 residues coordinate [2Fe-2S] cluster: Cys37, Cys41, Cys44, and Cys76. Residues 101–205 enclose the FAD-binding FR-type domain; sequence QTNWLAEILA…RGPAGSFFLH (105 aa). 215-229 is a binding site for FAD; sequence VAGGTGLSPVLSMIR.

The soluble methane monooxygenase (sMMO) consists of four components A/MMOH (composed of alpha/MmoX, beta/MmoY and gamma/MmoZ), B/MMOB (MmoB), C/MMOR (MmoC) and D/MMOD (MmoD). [2Fe-2S] cluster is required as a cofactor.

The catalysed reaction is methane + NADH + O2 + H(+) = methanol + NAD(+) + H2O. It catalyses the reaction methane + NADPH + O2 + H(+) = methanol + NADP(+) + H2O. In terms of biological role, responsible for the initial oxygenation of methane to methanol in methanotrophs. It also catalyzes the monohydroxylation of a variety of unactivated alkenes, alicyclic, aromatic and heterocyclic compounds. The component C is the iron-sulfur flavoprotein of sMMO. The protein is Methane monooxygenase component C (mmoC) of Methylosinus trichosporium.